A 188-amino-acid chain; its full sequence is Apolipoprotein M (188 aa).

Positions 1-22 form a signal peptide, not cleaved; sequence MFHQIWAALLYFYGIILNSIYQ. 3 cysteine pairs are disulfide-bonded: Cys23-Cys167, Cys95-Cys183, and Cys128-Cys157. Asn135 carries an N-linked (GlcNAc...) asparagine glycan. Residues Glu136 and Arg143 each contribute to the tetradecanoate site.

It belongs to the calycin superfamily. Lipocalin family. Highly divergent. In terms of assembly, interacts with LRP2; LRP2 mediates APOM renal uptake and subsequent lysosomal degradation.

The protein resides in the secreted. Its function is as follows. Probably involved in lipid transport. Can bind sphingosine-1-phosphate, myristic acid, palmitic acid and stearic acid, retinol, all-trans-retinoic acid and 9-cis-retinoic acid. In Pongo abelii (Sumatran orangutan), this protein is Apolipoprotein M (APOM).